Here is a 530-residue protein sequence, read N- to C-terminus: Estrogen receptor beta (530 aa).

The segment at 1 to 148 is modulating; sequence MDIKNSPSSL…GPSSKRDAHF (148 aa). A Phosphoserine; alternate modification is found at S61. O-linked (GlcNAc) serine; alternate glycosylation occurs at S61. Residues S87 and S105 each carry the phosphoserine; by MAPK modification. NR C4-type zinc fingers lie at residues 149–169 and 185–209; these read CAVC…CEGC and CPAT…LRKC. Positions 149 to 214 form a DNA-binding region, nuclear receptor; it reads CAVCSDYASG…RLRKCYEVGM (66 aa). The NR LBD domain maps to 264-498; the sequence is SPEQLVLTLL…DLLLEMMNAH (235 aa). The tract at residues 507–530 is disordered; the sequence is ITGSECSPAEDSKSTEGSQNPQSP. Over residues 521–530 the composition is skewed to polar residues; it reads TEGSQNPQSP.

Belongs to the nuclear hormone receptor family. NR3 subfamily. As to quaternary structure, binds DNA as a homodimer. Can form a heterodimer with ESR1. Interacts with NCOA1, NCOA3, NCOA5 and NCOA6 coactivators, leading to a strong increase of transcription of target genes. Interacts with UBE1C and AKAP13. Interacts with DNTTIP2. Interacts with CCDC62 in the presence of estradiol/E2; this interaction seems to enhance the transcription of target genes. Interacts with DNAAF4. Interacts with PRMT2. Interacts with CCAR2 (via N-terminus) in a ligand-independent manner. Interacts with RBM39, in the presence of estradiol (E2). Interacts with STUB1/CHIP. Post-translationally, phosphorylation at Ser-87 and Ser-105 recruits NCOA1.

Its subcellular location is the nucleus. In terms of biological role, nuclear hormone receptor. Binds estrogens with an affinity similar to that of ESR1/ER-alpha, and activates expression of reporter genes containing estrogen response elements (ERE) in an estrogen-dependent manner. This is Estrogen receptor beta (ESR2) from Callithrix jacchus (White-tufted-ear marmoset).